A 228-amino-acid polypeptide reads, in one-letter code: Probable U3 small nucleolar RNA-associated protein 11 (228 aa).

2 disordered regions span residues 1-23 (MSSL…EARK) and 192-211 (SMQK…DDEL). A compositionally biased stretch (basic and acidic residues) spans 12–23 (AHKERSQPEARK).

The protein belongs to the UTP11 family. Component of the ribosomal small subunit (SSU) processome.

It is found in the nucleus. Its subcellular location is the nucleolus. Its function is as follows. Involved in nucleolar processing of pre-18S ribosomal RNA. The polypeptide is Probable U3 small nucleolar RNA-associated protein 11 (Arabidopsis thaliana (Mouse-ear cress)).